The chain runs to 172 residues: S-ribosylhomocysteine lyase (172 aa).

Fe cation is bound by residues His-54, His-58, and Cys-128.

The protein belongs to the LuxS family. Homodimer. The cofactor is Fe cation.

The enzyme catalyses S-(5-deoxy-D-ribos-5-yl)-L-homocysteine = (S)-4,5-dihydroxypentane-2,3-dione + L-homocysteine. In terms of biological role, involved in the synthesis of autoinducer 2 (AI-2) which is secreted by bacteria and is used to communicate both the cell density and the metabolic potential of the environment. The regulation of gene expression in response to changes in cell density is called quorum sensing. Catalyzes the transformation of S-ribosylhomocysteine (RHC) to homocysteine (HC) and 4,5-dihydroxy-2,3-pentadione (DPD). This is S-ribosylhomocysteine lyase from Photobacterium profundum (strain SS9).